We begin with the raw amino-acid sequence, 583 residues long: Isocitrate dehydrogenase kinase/phosphatase (583 aa).

Residues 315–321 and lysine 336 each bind ATP; that span reads APGIRGM. Aspartate 371 is a catalytic residue.

This sequence belongs to the AceK family.

The protein resides in the cytoplasm. The enzyme catalyses L-seryl-[isocitrate dehydrogenase] + ATP = O-phospho-L-seryl-[isocitrate dehydrogenase] + ADP + H(+). Functionally, bifunctional enzyme which can phosphorylate or dephosphorylate isocitrate dehydrogenase (IDH) on a specific serine residue. This is a regulatory mechanism which enables bacteria to bypass the Krebs cycle via the glyoxylate shunt in response to the source of carbon. When bacteria are grown on glucose, IDH is fully active and unphosphorylated, but when grown on acetate or ethanol, the activity of IDH declines drastically concomitant with its phosphorylation. This Salmonella gallinarum (strain 287/91 / NCTC 13346) protein is Isocitrate dehydrogenase kinase/phosphatase.